The sequence spans 223 residues: MKTIQIAIDGPASSGKSTVAKIIAKDFGFTYLDTGAMYRAATYMALKNQLVVEEVEALLALLDQHPISFGRSETGDQLVFVGDVDITHPIRENEVTNHVSAIAAIPEVREKLVSLQQEIAQQGGIVMDGRDIGTVVLPQAELKIFLVASVDERAERRYKENIAKGIETDLETLKKEIAARDYKDSHRETSPLKQAEDAVYLDTTGLNIQEVVEKIKAEAEKRM.

Gly-10–Thr-18 serves as a coordination point for ATP.

The protein belongs to the cytidylate kinase family. Type 1 subfamily.

The protein resides in the cytoplasm. The catalysed reaction is CMP + ATP = CDP + ADP. It carries out the reaction dCMP + ATP = dCDP + ADP. The chain is Cytidylate kinase from Streptococcus pneumoniae (strain Taiwan19F-14).